A 354-amino-acid polypeptide reads, in one-letter code: S-adenosylmethionine:tRNA ribosyltransferase-isomerase (354 aa).

Belongs to the QueA family. As to quaternary structure, monomer.

The protein resides in the cytoplasm. It carries out the reaction 7-aminomethyl-7-carbaguanosine(34) in tRNA + S-adenosyl-L-methionine = epoxyqueuosine(34) in tRNA + adenine + L-methionine + 2 H(+). It participates in tRNA modification; tRNA-queuosine biosynthesis. Functionally, transfers and isomerizes the ribose moiety from AdoMet to the 7-aminomethyl group of 7-deazaguanine (preQ1-tRNA) to give epoxyqueuosine (oQ-tRNA). The protein is S-adenosylmethionine:tRNA ribosyltransferase-isomerase of Thermosynechococcus vestitus (strain NIES-2133 / IAM M-273 / BP-1).